Here is a 426-residue protein sequence, read N- to C-terminus: Putative F-box/LRR-repeat protein At4g15060 (426 aa).

The region spanning 25–71 (MDKISRLPDDLLVKVLLFLPTKIAVSTSILSKRWEFLWMWLPKLEYH) is the F-box domain. LRR repeat units lie at residues 50–75 (STSI…NTNY), 80–106 (EQRL…RLKF), 160–187 (ILKL…LLKR), 188–213 (VTYK…VVER), 221–259 (TLSI…KLTD), 265–290 (ETEL…HIDS), 311–337 (CVKV…KLCP), 338–363 (CDSN…EIKL), and 373–399 (DPAC…TWTW).

The polypeptide is Putative F-box/LRR-repeat protein At4g15060 (Arabidopsis thaliana (Mouse-ear cress)).